A 308-amino-acid polypeptide reads, in one-letter code: Mitochondrial import receptor subunit TOM40B (308 aa).

Positions 1-29 (MGNTLGLAPMGTLPRRSPRREEPLPNPGS) are disordered. Residues 281–308 (PLPVTLALGAFLNHWRNRFHCGFSITVG) are required for mitochondrial targeting.

This sequence belongs to the Tom40 family. In terms of assembly, forms part of the preprotein translocase of the outer mitochondrial membrane (TOM complex) containing TOMM22, TOMM40, TOMM40L and TOMM70. Interacts with mitochondrial targeting sequences.

The protein localises to the mitochondrion outer membrane. Potential channel-forming protein implicated in import of protein precursors into mitochondria. The polypeptide is Mitochondrial import receptor subunit TOM40B (TOMM40L) (Homo sapiens (Human)).